The following is a 471-amino-acid chain: DnaJ protein P58IPK homolog B (471 aa).

A signal peptide spans 1–24 (MARWPWRWRVLLPLLLLHSSPVFA). 8 TPR repeats span residues 32–65 (PSTLFKRASEMMNLRKYDGSLGLLNAVLEVDPNH), 66–99 (SEAYRQRASVLRHKCRYKEAEGDYSKYLELKPGS), 112–146 (AQNALESAYGQFESHDFSKVLEYINKIVLVFSPNC), 148–180 (KAKLLKAKALLALEDYSSVISETGFILKEDEDN), 181–214 (LDALLLRGRAYYYLADHDVASRHYQKGLRLDPEH), 227–260 (LLKKTKSAEDNAAKGKLRVSAEDYKAALAMDPDH), 265–298 (VHLYLGLCKVLVKLGRGKEAISSCTEALNIDGEL), and 300–332 (DALTQRGEAKLLTEDWEGAVQDLKEASQKSPQD). A glycan (N-linked (GlcNAc...) asparagine) is linked at Asn64. The region spanning 353–419 (DWYKILGISK…DKRVRYDRGE (67 aa)) is the J domain.

As to quaternary structure, interacts with BIP1.

Its subcellular location is the endoplasmic reticulum lumen. Functionally, may play a role in protein folding in the endoplasmic reticulum. The sequence is that of DnaJ protein P58IPK homolog B from Oryza sativa subsp. japonica (Rice).